The chain runs to 86 residues: MAHKKGVGSSKNGRESESKRLGVKIFGGQAAIAGNIIVRQRGSKHNPGENVYMGKDHTLHARVAGLVKFQKKGENKSYVSVVAFEA.

The protein belongs to the bacterial ribosomal protein bL27 family.

The polypeptide is Large ribosomal subunit protein bL27 (Flavobacterium psychrophilum (strain ATCC 49511 / DSM 21280 / CIP 103535 / JIP02/86)).